A 135-amino-acid chain; its full sequence is Rheacalcin-1 (135 aa).

3 cysteine pairs are disulfide-bonded: Cys-6/Cys-17, Cys-34/Cys-131, and Cys-106/Cys-123. The region spanning 13 to 132 (FRGNCYGYFR…CSERNAFICK (120 aa)) is the C-type lectin domain.

Its subcellular location is the secreted. It localises to the extracellular space. The protein localises to the extracellular matrix. The polypeptide is Rheacalcin-1 (Rhea americana (Greater rhea)).